Consider the following 881-residue polypeptide: Lon protease (881 aa).

Positions 1–24 are enriched in basic and acidic residues; the sequence is MAKNTDIEHDAHEPAGHGDVRESA. The disordered stretch occupies residues 1–77; it reads MAKNTDIEHD…RAGEAEKGVP (77 aa). Polar residues predominate over residues 49 to 59; sequence QTDTESAQGAA. Basic and acidic residues predominate over residues 65–77; sequence EVQRAGEAEKGVP. A Lon N-terminal domain is found at 94-287; the sequence is VHLIPLTGRP…EVFVYIKKEK (194 aa). 440–447 lines the ATP pocket; sequence GPPGVGKT. The Lon proteolytic domain occupies 679–861; it reads ANKVGTAVGL…EEVLSLAFPK (183 aa). Residues Ser767 and Lys810 contribute to the active site.

Belongs to the peptidase S16 family. As to quaternary structure, homohexamer. Organized in a ring with a central cavity.

It is found in the cytoplasm. It carries out the reaction Hydrolysis of proteins in presence of ATP.. In terms of biological role, ATP-dependent serine protease that mediates the selective degradation of mutant and abnormal proteins as well as certain short-lived regulatory proteins. Required for cellular homeostasis and for survival from DNA damage and developmental changes induced by stress. Degrades polypeptides processively to yield small peptide fragments that are 5 to 10 amino acids long. Binds to DNA in a double-stranded, site-specific manner. The chain is Lon protease from Treponema pallidum (strain Nichols).